The primary structure comprises 231 residues: uncharacterized protein (231 aa).

Residues 1-25 form the signal peptide; the sequence is MAKWVPALLLRRVPLFSLRFRPASS. Topologically, residues 26–200 are extracellular; the sequence is TFLPVLAATE…SRPSPSATLT (175 aa). Positions 39 to 64 are disordered; that stretch reads SVPSGDLSMPVKTRAEGEDDGFGEAG. A helical transmembrane segment spans residues 201–225; that stretch reads LLLASSCLLAPAPPSFILLLFTLIA. The Cytoplasmic portion of the chain corresponds to 226-231; the sequence is PDLPHS.

The protein resides in the membrane. This is an uncharacterized protein from Homo sapiens (Human).